Here is a 376-residue protein sequence, read N- to C-terminus: Pyrimidine monooxygenase RutA (376 aa).

FMN contacts are provided by residues 61 to 62 (IK), Asn127, Glu136, 152 to 153 (RY), and Ser202.

It belongs to the NtaA/SnaA/DszA monooxygenase family. RutA subfamily.

The enzyme catalyses uracil + FMNH2 + NADH + O2 = (Z)-3-ureidoacrylate + FMN + NAD(+) + H2O + H(+). It carries out the reaction thymine + FMNH2 + NADH + O2 = (Z)-2-methylureidoacrylate + FMN + NAD(+) + H2O + H(+). Its function is as follows. Catalyzes the pyrimidine ring opening between N-3 and C-4 by an unusual flavin hydroperoxide-catalyzed mechanism, adding oxygen atoms in the process to yield ureidoacrylate peracid, that immediately reacts with FMN forming ureidoacrylate and FMN-N(5)-oxide. The FMN-N(5)-oxide reacts spontaneously with NADH to produce FMN. Requires the flavin reductase RutF to regenerate FMN in vivo. The protein is Pyrimidine monooxygenase RutA of Methylorubrum populi (strain ATCC BAA-705 / NCIMB 13946 / BJ001) (Methylobacterium populi).